The primary structure comprises 103 residues: Cell division protein FtsB (103 aa).

The Cytoplasmic segment spans residues M1–K3. A helical membrane pass occupies residues L4 to F21. Residues G22–R103 lie on the Periplasmic side of the membrane. Residues D28–A71 are a coiled coil.

This sequence belongs to the FtsB family. In terms of assembly, part of a complex composed of FtsB, FtsL and FtsQ.

The protein localises to the cell inner membrane. Functionally, essential cell division protein. May link together the upstream cell division proteins, which are predominantly cytoplasmic, with the downstream cell division proteins, which are predominantly periplasmic. This Shigella flexneri serotype 5b (strain 8401) protein is Cell division protein FtsB.